Here is a 216-residue protein sequence, read N- to C-terminus: Protein Syd (216 aa).

It belongs to the Syd family.

The protein resides in the cell inner membrane. Interacts with the SecY protein in vivo. May bind preferentially to an uncomplexed state of SecY, thus functioning either as a chelating agent for excess SecY in the cell or as a regulatory factor that negatively controls the translocase function. In Shewanella baltica (strain OS155 / ATCC BAA-1091), this protein is Protein Syd.